The primary structure comprises 233 residues: Hydroxyacylglutathione hydrolase (233 aa).

His-52, His-54, Asp-56, His-57, His-108, Asp-125, and His-163 together coordinate Zn(2+).

It belongs to the metallo-beta-lactamase superfamily. Glyoxalase II family. Monomer. Requires Zn(2+) as cofactor.

It carries out the reaction an S-(2-hydroxyacyl)glutathione + H2O = a 2-hydroxy carboxylate + glutathione + H(+). It functions in the pathway secondary metabolite metabolism; methylglyoxal degradation; (R)-lactate from methylglyoxal: step 2/2. Functionally, thiolesterase that catalyzes the hydrolysis of S-D-lactoyl-glutathione to form glutathione and D-lactic acid. This is Hydroxyacylglutathione hydrolase from Histophilus somni (strain 2336) (Haemophilus somnus).